Consider the following 232-residue polypeptide: Orotidine 5'-phosphate decarboxylase (232 aa).

Substrate-binding positions include Asp-13, Lys-35, 62-71 (DLKFHDIPNT), Thr-121, Arg-182, Gln-191, Gly-211, and Arg-212. Catalysis depends on Lys-64, which acts as the Proton donor.

It belongs to the OMP decarboxylase family. Type 1 subfamily. As to quaternary structure, homodimer.

It catalyses the reaction orotidine 5'-phosphate + H(+) = UMP + CO2. Its pathway is pyrimidine metabolism; UMP biosynthesis via de novo pathway; UMP from orotate: step 2/2. Functionally, catalyzes the decarboxylation of orotidine 5'-monophosphate (OMP) to uridine 5'-monophosphate (UMP). This Teredinibacter turnerae (strain ATCC 39867 / T7901) protein is Orotidine 5'-phosphate decarboxylase.